Here is a 316-residue protein sequence, read N- to C-terminus: E3 ubiquitin-protein ligase rnf146 (316 aa).

The segment at 36-74 (CAICLQTCVHPVSLPCKHIFCYLCVKGASWLGRRCALCR) adopts an RING-type zinc-finger fold. A WWE domain is found at 91–167 (EELKSASRGN…EHGRRRKIKR (77 aa)). A glycoprotein-binding residues include Tyr-107, Arg-110, Trp-114, Tyr-144, Gln-153, Arg-163, and Lys-175. Positions 257–316 (GRNNIGEGEEGQPLINARMPAPSALLEESEPSDSNDHGSPTLQHNSLLVPQSNRLPFGNP) are disordered. Over residues 293–310 (HGSPTLQHNSLLVPQSNR) the composition is skewed to polar residues.

The protein resides in the cytoplasm. The protein localises to the cytosol. Its subcellular location is the nucleus. The enzyme catalyses S-ubiquitinyl-[E2 ubiquitin-conjugating enzyme]-L-cysteine + [acceptor protein]-L-lysine = [E2 ubiquitin-conjugating enzyme]-L-cysteine + N(6)-ubiquitinyl-[acceptor protein]-L-lysine.. The protein operates within protein modification; protein ubiquitination. E3 ubiquitin-protein ligase that specifically binds poly-ADP-ribosylated proteins and mediates their ubiquitination and subsequent degradation. May regulate many important biological processes, such as cell survival and DNA damage response. Acts as an activator of the Wnt signaling pathway by mediating the ubiquitination of poly-ADP-ribosylated proteins. Neuroprotective protein. Protects against cell death induced by DNA damaging agents and rescues cells from G1 arrest. Promotes cell survival after gamma-irradiation. Facilitates DNA repair. This Xenopus tropicalis (Western clawed frog) protein is E3 ubiquitin-protein ligase rnf146 (rnf146).